The primary structure comprises 596 residues: MDVRRRPVKPLYTSKDASAGEPLKQQEVSSPKASDALPLPLYLTNGLFFTMFFSVMYFLLVRWREKIRNSIPLHVVTLSELLAMVSLIASVIYLLGFFGIGFVQSFVSRSNSDSWDIEDENAEQLIIEEDSRRGPCAAATTLGCVVPPPPVRKIAPMVPQQPAKVALSQTEKPSPIIMPALSEDDEEIIQSVVQGKTPSYSLESKLGDCMRAASIRKEALQRITGKSLEGLPLEGFDYSSILGQCCEMPVGYVQIPVGIAGPLLLDGREYSVPMATTEGCLVASTNRGCKAIFVSGGADSVLLRDGMTRAPVVRFTTAKRAAELKFFVEDPLNFETLSLMFNKSSRFARLQGIQCAIAGKNLYITFSCSTGDAMGMNMVSKGVQNVLDYLQSEYPDMDVIGISGNFCSDKKPAAVNWIEGRGKSVVCEAIIKEEVVKKVLKTEVAALVELNMLKNLTGSAMAGALGGFNAHASNIVSAVYLATGQDPAQNVESSHCITMMEAVNDGKDLHVSVTMPSIEVGTVGGGTQLASQSACLNLLGVKGANRDAPGSNARLLATIVAGSVLAGELSLMSAISAGQLVKSHMKYNRSIKDISK.

The tract at residues 1-29 is disordered; the sequence is MDVRRRPVKPLYTSKDASAGEPLKQQEVS. 2 helical membrane-spanning segments follow: residues 41 to 61 and 83 to 103; these read LYLT…FLLV and AMVS…IGFV. A linker region spans residues 104-183; the sequence is QSFVSRSNSD…SPIIMPALSE (80 aa). A catalytic region spans residues 184–596; the sequence is DDEEIIQSVV…YNRSIKDISK (413 aa). E278 acts as the Charge relay system in catalysis. N342 carries N-linked (GlcNAc...) asparagine glycosylation. The active-site Charge relay system is the K410. The N-linked (GlcNAc...) asparagine glycan is linked to N455. D486 serves as the catalytic Charge relay system. The active-site Proton donor is H584. N588 is a glycosylation site (N-linked (GlcNAc...) asparagine).

It belongs to the HMG-CoA reductase family. As to expression, expressed in flower primordia and anthers.

It is found in the endoplasmic reticulum membrane. It catalyses the reaction (R)-mevalonate + 2 NADP(+) + CoA = (3S)-3-hydroxy-3-methylglutaryl-CoA + 2 NADPH + 2 H(+). Its pathway is metabolic intermediate biosynthesis; (R)-mevalonate biosynthesis; (R)-mevalonate from acetyl-CoA: step 3/3. In terms of biological role, catalyzes the synthesis of mevalonate. The specific precursor of all isoprenoid compounds present in plants. This Solanum tuberosum (Potato) protein is 3-hydroxy-3-methylglutaryl-coenzyme A reductase 1 (HMG1).